The sequence spans 67 residues: Small ribosomal subunit protein eS27 (67 aa).

Zn(2+) contacts are provided by Cys-22, Cys-25, Cys-41, and Cys-44. The segment at 22–44 adopts a C4-type zinc-finger fold; it reads CPDCGNEQVTFSHAAMVVRCLVC.

It belongs to the eukaryotic ribosomal protein eS27 family. In terms of assembly, part of the 30S ribosomal subunit. Zn(2+) serves as cofactor.

The protein is Small ribosomal subunit protein eS27 of Pyrobaculum neutrophilum (strain DSM 2338 / JCM 9278 / NBRC 100436 / V24Sta) (Thermoproteus neutrophilus).